The primary structure comprises 269 residues: Staphylococcal secretory antigen ssaA2 (269 aa).

The first 27 residues, 1-27, serve as a signal peptide directing secretion; it reads MKKIATATIATAGFATIAIASGNQAHA. A run of 7 repeats spans residues 83–85, 88–90, 91–93, 97–99, 103–105, 106–108, and 115–117. Positions 83–115 are 7 X 3 AA repeats of Y-[NS]-N; that stretch reads YNNYNYNNYNNGYSYNNYSRYNNYSNNNQSYNY. Positions 148–269 constitute a Peptidase C51 domain; that stretch reads MAPSSNGRSI…SQAAGYNFIH (122 aa).

Its subcellular location is the secreted. Its function is as follows. Not known; immunogenic protein. In Staphylococcus aureus (strain MSSA476), this protein is Staphylococcal secretory antigen ssaA2 (ssaA2).